The chain runs to 209 residues: 3-demethoxyubiquinol 3-hydroxylase (209 aa).

Fe cation is bound by residues Glu58, Glu88, His91, Glu140, Glu172, and His175.

Belongs to the COQ7 family. Fe cation is required as a cofactor.

The protein localises to the cell membrane. The enzyme catalyses a 5-methoxy-2-methyl-3-(all-trans-polyprenyl)benzene-1,4-diol + AH2 + O2 = a 3-demethylubiquinol + A + H2O. It participates in cofactor biosynthesis; ubiquinone biosynthesis. Catalyzes the hydroxylation of 2-nonaprenyl-3-methyl-6-methoxy-1,4-benzoquinol during ubiquinone biosynthesis. The sequence is that of 3-demethoxyubiquinol 3-hydroxylase from Polaromonas sp. (strain JS666 / ATCC BAA-500).